The sequence spans 142 residues: MDCIKFTVYGEPVAQGRPRGSIRNGKVHMRDPAKSKYFKQYVALVASQHRPETIITGPVSMDVKVYRPMPKSVSNSKKKKEKAEKGLLRPTTKPDVDNYVKGVKDALNHLIYKDDSQVVDLKVSKFYSEEPRVEVMIREVSA.

The segment at 70-94 (PKSVSNSKKKKEKAEKGLLRPTTKP) is disordered. Residues 81–94 (EKAEKGLLRPTTKP) show a composition bias toward basic and acidic residues.

This is an uncharacterized protein from Bacillus subtilis (strain 168).